A 738-amino-acid chain; its full sequence is Phosphoribosylformylglycinamidine synthase subunit PurL (738 aa).

Histidine 41 is a catalytic residue. ATP is bound by residues tyrosine 44 and lysine 83. Glutamate 85 is a binding site for Mg(2+). Residues 86–89 (SHNH) and arginine 108 contribute to the substrate site. Histidine 87 acts as the Proton acceptor in catalysis. Aspartate 109 contacts Mg(2+). Residue glutamine 233 coordinates substrate. Residue aspartate 261 participates in Mg(2+) binding. 305–307 (ESQ) is a substrate binding site. Aspartate 490 and glycine 527 together coordinate ATP. Residue asparagine 528 coordinates Mg(2+). Serine 530 contacts substrate.

The protein belongs to the FGAMS family. In terms of assembly, monomer. Part of the FGAM synthase complex composed of 1 PurL, 1 PurQ and 2 PurS subunits.

It is found in the cytoplasm. It catalyses the reaction N(2)-formyl-N(1)-(5-phospho-beta-D-ribosyl)glycinamide + L-glutamine + ATP + H2O = 2-formamido-N(1)-(5-O-phospho-beta-D-ribosyl)acetamidine + L-glutamate + ADP + phosphate + H(+). It functions in the pathway purine metabolism; IMP biosynthesis via de novo pathway; 5-amino-1-(5-phospho-D-ribosyl)imidazole from N(2)-formyl-N(1)-(5-phospho-D-ribosyl)glycinamide: step 1/2. Part of the phosphoribosylformylglycinamidine synthase complex involved in the purines biosynthetic pathway. Catalyzes the ATP-dependent conversion of formylglycinamide ribonucleotide (FGAR) and glutamine to yield formylglycinamidine ribonucleotide (FGAM) and glutamate. The FGAM synthase complex is composed of three subunits. PurQ produces an ammonia molecule by converting glutamine to glutamate. PurL transfers the ammonia molecule to FGAR to form FGAM in an ATP-dependent manner. PurS interacts with PurQ and PurL and is thought to assist in the transfer of the ammonia molecule from PurQ to PurL. This chain is Phosphoribosylformylglycinamidine synthase subunit PurL, found in Alkaliphilus metalliredigens (strain QYMF).